The chain runs to 246 residues: Deoxycytidylate 5-hydroxymethyltransferase (246 aa).

Residue C148 is part of the active site.

The protein belongs to the thymidylate synthase family.

The catalysed reaction is dCMP + (6R)-5,10-methylene-5,6,7,8-tetrahydrofolate + H2O = 5-hydroxymethyl-dCMP + (6S)-5,6,7,8-tetrahydrofolate. In Enterobacteria phage T4 (Bacteriophage T4), this protein is Deoxycytidylate 5-hydroxymethyltransferase (42).